Reading from the N-terminus, the 423-residue chain is Growth hormone-releasing hormone receptor (423 aa).

The N-terminal stretch at 1–22 (MDGLMWATRILCLLSLCGVTLG) is a signal peptide. Topologically, residues 23 to 130 (HLHLECDFIT…KEKSYFSTVK (108 aa)) are extracellular. 3 cysteine pairs are disulfide-bonded: Cys-41–Cys-64, Cys-55–Cys-96, and Cys-78–Cys-112. Asn-49 and Asn-50 each carry an N-linked (GlcNAc...) asparagine glycan. The helical transmembrane segment at 131–151 (IIYTTGHSISIVALCVAIAIL) threads the bilayer. Residues 152 to 167 (VALRRLHCPRNYIHTQ) are Cytoplasmic-facing. The chain crosses the membrane as a helical span at residues 168-188 (LFATFILKASAVFLKDAAIFQ). Residues 189–210 (GDSTDHCSMSTVLCKVSVAISH) are Extracellular-facing. The helical transmembrane segment at 211–231 (LATMTNFSWLLAEAVYLSCLL) threads the bilayer. Topologically, residues 232–240 (ASTSPRSKP) are cytoplasmic. A helical membrane pass occupies residues 241–261 (AFWWLVLAGWGLPVLCTGTWV). At 262–283 (GCKLAFEDTECWDLDNSSPCWW) the chain is on the extracellular side. Residues 284–304 (IIKGPIVLSVGVNFGLFLNII) traverse the membrane as a helical segment. Over 305–331 (CILLRKLEPAQGGLHTRAQYWRLSKST) the chain is Cytoplasmic. The helical transmembrane segment at 332–352 (LLLIPLFGIHYIIFNFLPDSA) threads the bilayer. Residues 353–357 (GLDIR) are Extracellular-facing. The helical transmembrane segment at 358-378 (VPLELGLGSFQGFIVAVLYCF) threads the bilayer. Residues 379 to 423 (LNQEVRTEISRKWYGHDPELLPARRTCTEWTTPPRSRLKVLTSEC) lie on the Cytoplasmic side of the membrane.

It belongs to the G-protein coupled receptor 2 family. Pituitary gland.

The protein localises to the cell membrane. In terms of biological role, receptor for GRF, coupled to G proteins which activate adenylyl cyclase. Stimulates somatotroph cell growth, growth hormone gene transcription and growth hormone secretion. This chain is Growth hormone-releasing hormone receptor (Ghrhr), found in Mus musculus (Mouse).